We begin with the raw amino-acid sequence, 444 residues long: Chromosomal replication initiator protein DnaA (444 aa).

A domain I, interacts with DnaA modulators region spans residues 1 to 73 (MDSSAQQLWH…AEVVQDIVGY (73 aa)). The domain II stretch occupies residues 73–104 (YPVEIQLTAQQGDLIAIFQPHTSLESELSPTN). The segment at 105-321 (QLNPKYNFSR…GALIRATTYI (217 aa)) is domain III, AAA+ region. Residues Gly149, Gly151, Lys152, and Thr153 each coordinate ATP. Residues 322-444 (SISGLPMTVE…ERINSLSRNQ (123 aa)) are domain IV, binds dsDNA.

Belongs to the DnaA family. As to quaternary structure, oligomerizes as a right-handed, spiral filament on DNA at oriC.

It localises to the cytoplasm. Its function is as follows. Plays an essential role in the initiation and regulation of chromosomal replication. ATP-DnaA binds to the origin of replication (oriC) to initiate formation of the DNA replication initiation complex once per cell cycle. Binds the DnaA box (a 9 base pair repeat at the origin) and separates the double-stranded (ds)DNA. Forms a right-handed helical filament on oriC DNA; dsDNA binds to the exterior of the filament while single-stranded (ss)DNA is stabiized in the filament's interior. The ATP-DnaA-oriC complex binds and stabilizes one strand of the AT-rich DNA unwinding element (DUE), permitting loading of DNA polymerase. After initiation quickly degrades to an ADP-DnaA complex that is not apt for DNA replication. Binds acidic phospholipids. The protein is Chromosomal replication initiator protein DnaA of Microcystis aeruginosa (strain NIES-843 / IAM M-2473).